The sequence spans 136 residues: Calcitonin (136 aa).

A signal peptide spans 1 to 25; the sequence is MGFLKFSPFLVVSILLLYQACGLQA. A propeptide spanning residues 26 to 82 is cleaved from the precursor; it reads VPLRSTLESSPGMATLSEEEARLLAALVQNYMQMKVRELEQEEEQEAEGSSLDSPRS. Phosphoserine is present on S42. Residues 64–84 are disordered; sequence LEQEEEQEAEGSSLDSPRSKR. Residues C85 and C91 are joined by a disulfide bond. A glycan (N-linked (GlcNAc...) asparagine) is linked at N87. Positions 114–136 are disordered; sequence GAPGKKRDMAKDLETNHHPYFGN. A Proline amide modification is found at P116. Basic and acidic residues predominate over residues 118 to 130; the sequence is KKRDMAKDLETNH. The propeptide occupies 121 to 136; it reads DMAKDLETNHHPYFGN.

This sequence belongs to the calcitonin family.

It localises to the secreted. Functionally, calcitonin is a peptide hormone that causes a rapid but short-lived drop in the level of calcium and phosphate in blood by promoting the incorporation of those ions in the bones. Calcitonin function is mediated by the calcitonin receptor/CALCR and the CALCR-RAMP2 (AMYR2) receptor complex. The sequence is that of Calcitonin from Rattus norvegicus (Rat).